The primary structure comprises 421 residues: Calreticulin (421 aa).

A signal peptide spans 1 to 22 (MAFRVPNSSLLSLILLSLLAIA). N-linked (GlcNAc...) asparagine glycosylation is present at Asn-56. The cysteines at positions 110 and 142 are disulfide-linked. An alpha-D-glucoside contacts are provided by Tyr-114, Lys-116, Tyr-133, and Asp-140. N-linked (GlcNAc...) asparagine glycosylation is present at Asn-156. 7 tandem repeats follow at residues 196–207 (KQTGSLYSDWDL), 215–226 (DPEAKKPEDWED), 232–243 (DPEDKKPEGYDD), 250–261 (DPDAKKPEDWDD), 265–275 (GEWTAPTIPNP), 279–289 (GEWKPKKIKNP), and 293–303 (GKWKAPLIDNP). Residues 196–261 (KQTGSLYSDW…DAKKPEDWDD (66 aa)) are 4 X approximate repeats. Residues 217-283 (EAKKPEDWED…NPEYKGEWKP (67 aa)) are disordered. Positions 223–232 (DWEDQEYIPD) are enriched in acidic residues. Positions 233 to 257 (PEDKKPEGYDDIPKEITDPDAKKPE) are enriched in basic and acidic residues. The interval 265–303 (GEWTAPTIPNPEYKGEWKPKKIKNPNFKGKWKAPLIDNP) is 3 X approximate repeats. Glu-323 is an an alpha-D-glucoside binding site. Residues 350–380 (EETWGKQKDAEKAAFEELEKKLQEEESKEDP) show a composition bias toward basic and acidic residues. The segment at 350–421 (EETWGKQKDA…ETEAEKHDEL (72 aa)) is disordered. The segment covering 381–399 (VDSDAEDDDNEAEDGEESD) has biased composition (acidic residues). Residues 418 to 421 (HDEL) carry the Prevents secretion from ER motif.

This sequence belongs to the calreticulin family.

It localises to the endoplasmic reticulum lumen. In terms of biological role, molecular calcium-binding chaperone promoting folding, oligomeric assembly and quality control in the ER via the calreticulin/calnexin cycle. This lectin may interact transiently with almost all of the monoglucosylated glycoproteins that are synthesized in the ER. In Prunus armeniaca (Apricot), this protein is Calreticulin.